A 450-amino-acid polypeptide reads, in one-letter code: Bifunctional protein GlmU (450 aa).

Residues 1–229 (MRRHAIILAA…VEEIMGVNDR (229 aa)) are pyrophosphorylase. Residues 8–11 (LAAG), lysine 22, glutamine 72, and 77–78 (GT) each bind UDP-N-acetyl-alpha-D-glucosamine. Aspartate 102 is a Mg(2+) binding site. UDP-N-acetyl-alpha-D-glucosamine-binding residues include glycine 139, glutamate 154, and asparagine 227. Asparagine 227 contacts Mg(2+). The interval 230-250 (VMLSQAEKAMQRRTNHYHMLN) is linker. The N-acetyltransferase stretch occupies residues 251–450 (GVTIIDPDST…RQTTKEGYRK (200 aa)). The UDP-N-acetyl-alpha-D-glucosamine site is built by arginine 332 and lysine 350. Catalysis depends on histidine 362, which acts as the Proton acceptor. UDP-N-acetyl-alpha-D-glucosamine-binding residues include tyrosine 365 and asparagine 376. Residues 385–386 (NY), alanine 422, and arginine 439 contribute to the acetyl-CoA site.

The protein in the N-terminal section; belongs to the N-acetylglucosamine-1-phosphate uridyltransferase family. It in the C-terminal section; belongs to the transferase hexapeptide repeat family. In terms of assembly, homotrimer. Mg(2+) serves as cofactor.

The protein resides in the cytoplasm. It carries out the reaction alpha-D-glucosamine 1-phosphate + acetyl-CoA = N-acetyl-alpha-D-glucosamine 1-phosphate + CoA + H(+). The enzyme catalyses N-acetyl-alpha-D-glucosamine 1-phosphate + UTP + H(+) = UDP-N-acetyl-alpha-D-glucosamine + diphosphate. The protein operates within nucleotide-sugar biosynthesis; UDP-N-acetyl-alpha-D-glucosamine biosynthesis; N-acetyl-alpha-D-glucosamine 1-phosphate from alpha-D-glucosamine 6-phosphate (route II): step 2/2. Its pathway is nucleotide-sugar biosynthesis; UDP-N-acetyl-alpha-D-glucosamine biosynthesis; UDP-N-acetyl-alpha-D-glucosamine from N-acetyl-alpha-D-glucosamine 1-phosphate: step 1/1. It participates in bacterial outer membrane biogenesis; LPS lipid A biosynthesis. Catalyzes the last two sequential reactions in the de novo biosynthetic pathway for UDP-N-acetylglucosamine (UDP-GlcNAc). The C-terminal domain catalyzes the transfer of acetyl group from acetyl coenzyme A to glucosamine-1-phosphate (GlcN-1-P) to produce N-acetylglucosamine-1-phosphate (GlcNAc-1-P), which is converted into UDP-GlcNAc by the transfer of uridine 5-monophosphate (from uridine 5-triphosphate), a reaction catalyzed by the N-terminal domain. This Staphylococcus aureus (strain USA300) protein is Bifunctional protein GlmU.